The following is a 684-amino-acid chain: RNA helicase NPH-II (684 aa).

The 176-residue stretch at F184 to H359 folds into the Helicase ATP-binding domain. An ATP-binding site is contributed by G197–T204. Residues D308–H311 carry the DEXH box motif. In terms of domain architecture, Helicase C-terminal spans N392–E563.

The protein belongs to the DEAD box helicase family. DEAH subfamily. Monomer.

The protein resides in the virion. It carries out the reaction ATP + H2O = ADP + phosphate + H(+). Functionally, NTP-dependent helicase that catalyzes unidirectional unwinding of 3'tailed duplex RNAs and plays an important role during transcription of early mRNAs, presumably by preventing R-loop formation behind the elongating RNA polymerase. Might also play a role in the export of newly synthesized mRNA chains out of the core into the cytoplasm. Required for replication and propagation of viral particles. The sequence is that of RNA helicase NPH-II (NPH2) from Homo sapiens (Human).